A 507-amino-acid chain; its full sequence is Nucleoporin p54 (507 aa).

A run of 9 repeats spans residues 5-6 (FG), 25-26 (FG), 28-29 (FG), 53-54 (FG), 61-62 (FG), 63-64 (FG), 67-68 (FG), 87-88 (FG), and 444-445 (FG). The tract at residues 5–445 (FGAPSGTSGT…SQIRMQNHFG (441 aa)) is 9 X 2 AA repeats of F-G.

Belongs to the NUP54 family. As to quaternary structure, component of the p62 complex, a complex composed of NUP62, NUP54, and the isoform p58 and isoform p45 of NUP58. Interacts with NUTF2. Post-translationally, O-glycosylated.

It localises to the nucleus. Its subcellular location is the nuclear pore complex. The protein localises to the nucleus membrane. In terms of biological role, component of the nuclear pore complex, a complex required for the trafficking across the nuclear membrane. The protein is Nucleoporin p54 (NUP54) of Homo sapiens (Human).